We begin with the raw amino-acid sequence, 372 residues long: 4-hydroxy-3-methylbut-2-en-1-yl diphosphate synthase (flavodoxin) (372 aa).

4 residues coordinate [4Fe-4S] cluster: cysteine 270, cysteine 273, cysteine 305, and glutamate 312.

The protein belongs to the IspG family. It depends on [4Fe-4S] cluster as a cofactor.

It catalyses the reaction (2E)-4-hydroxy-3-methylbut-2-enyl diphosphate + oxidized [flavodoxin] + H2O + 2 H(+) = 2-C-methyl-D-erythritol 2,4-cyclic diphosphate + reduced [flavodoxin]. It participates in isoprenoid biosynthesis; isopentenyl diphosphate biosynthesis via DXP pathway; isopentenyl diphosphate from 1-deoxy-D-xylulose 5-phosphate: step 5/6. In terms of biological role, converts 2C-methyl-D-erythritol 2,4-cyclodiphosphate (ME-2,4cPP) into 1-hydroxy-2-methyl-2-(E)-butenyl 4-diphosphate. The chain is 4-hydroxy-3-methylbut-2-en-1-yl diphosphate synthase (flavodoxin) from Shigella dysenteriae serotype 1 (strain Sd197).